A 220-amino-acid chain; its full sequence is Iron-sulfur cluster repair protein YtfE (220 aa).

This sequence belongs to the RIC family. YtfE subfamily. In terms of assembly, homodimer.

The protein resides in the cytoplasm. Di-iron-containing protein involved in the repair of iron-sulfur clusters damaged by oxidative and nitrosative stress conditions. The polypeptide is Iron-sulfur cluster repair protein YtfE (Salmonella choleraesuis (strain SC-B67)).